Here is a 71-residue protein sequence, read N- to C-terminus: Small ribosomal subunit protein bS21 (71 aa).

Over residues Lys48–Lys59 the composition is skewed to basic residues. Residues Lys48–Tyr71 are disordered. Basic and acidic residues predominate over residues Val60–Tyr71.

This sequence belongs to the bacterial ribosomal protein bS21 family.

This Azotobacter vinelandii (strain DJ / ATCC BAA-1303) protein is Small ribosomal subunit protein bS21.